The primary structure comprises 192 residues: Cytochrome c4 (192 aa).

Cytochrome c domains lie at 12 to 90 and 99 to 191; these read GDPQ…ATQP and ELAS…QGLS. Positions 25, 28, 29, 120, 123, and 124 each coordinate heme c.

Binds 2 heme c groups covalently per subunit.

The protein localises to the periplasm. Diheme, high potential cytochrome c believed to be an intermediate electron donor in an anaerobic electron transport chain. The protein is Cytochrome c4 of Thiocapsa roseopersicina.